The chain runs to 132 residues: Phosphoribosyl-AMP cyclohydrolase (132 aa).

Asp79 contacts Mg(2+). Cys80 serves as a coordination point for Zn(2+). The Mg(2+) site is built by Asp81 and Asp83. Cys100 and Cys107 together coordinate Zn(2+).

Belongs to the PRA-CH family. In terms of assembly, homodimer. Requires Mg(2+) as cofactor. It depends on Zn(2+) as a cofactor.

The protein localises to the cytoplasm. The catalysed reaction is 1-(5-phospho-beta-D-ribosyl)-5'-AMP + H2O = 1-(5-phospho-beta-D-ribosyl)-5-[(5-phospho-beta-D-ribosylamino)methylideneamino]imidazole-4-carboxamide. It participates in amino-acid biosynthesis; L-histidine biosynthesis; L-histidine from 5-phospho-alpha-D-ribose 1-diphosphate: step 3/9. In terms of biological role, catalyzes the hydrolysis of the adenine ring of phosphoribosyl-AMP. This Acidovorax ebreus (strain TPSY) (Diaphorobacter sp. (strain TPSY)) protein is Phosphoribosyl-AMP cyclohydrolase.